A 576-amino-acid polypeptide reads, in one-letter code: Arginine--tRNA ligase (576 aa).

The 'HIGH' region signature appears at 122-132 (PNVAKQMHVGH).

Belongs to the class-I aminoacyl-tRNA synthetase family. In terms of assembly, monomer.

The protein resides in the cytoplasm. The catalysed reaction is tRNA(Arg) + L-arginine + ATP = L-arginyl-tRNA(Arg) + AMP + diphosphate. In Yersinia pseudotuberculosis serotype O:1b (strain IP 31758), this protein is Arginine--tRNA ligase.